The following is a 582-amino-acid chain: Protein NRT1/ PTR FAMILY 5.2 (582 aa).

11 helical membrane-spanning segments follow: residues 77–97 (WVGT…ALLG), 100–120 (ITFV…TLSV), 141–161 (ASVL…IGTG), 189–209 (FFNW…TVLV), 217–237 (WTLG…IFLL), 334–354 (PVLF…TLFV), 370–390 (IPPA…IVLY), 408–428 (ITLL…MIVA), 452–472 (LPLT…ADSF), 493–515 (GTSY…LSTV), and 538–558 (YYYL…LVVV).

The protein belongs to the major facilitator superfamily. Proton-dependent oligopeptide transporter (POT/PTR) (TC 2.A.17) family. Expressed in roots. Detected in shoots, leaves and flowers.

It localises to the membrane. Its function is as follows. Peptide transporter involved in stress tolerance in seeds during germination and in defense against virulent bacterial pathogens. The chain is Protein NRT1/ PTR FAMILY 5.2 (NPF5.2) from Arabidopsis thaliana (Mouse-ear cress).